The chain runs to 466 residues: 55 kDa erythrocyte membrane protein (466 aa).

At Thr2 the chain carries N-acetylthreonine. Residues Ser13 and Ser19 each carry the phosphoserine modification. Thr49 is subject to Phosphothreonine. Phosphoserine is present on residues Ser52, Ser57, and Ser110. The region spanning 71 to 152 (LIQFEKVTEE…MISLKVIPNQ (82 aa)) is the PDZ domain. Positions 158-228 (ALQMFMRAQF…PSPELQEWRV (71 aa)) constitute an SH3 domain. Ser243 is modified (phosphoserine). Residues 268–466 (VVSYEEVVRL…PQWVPVSWVY (199 aa)) form an interaction with PALS1 region. Residues 282-451 (RKTLVLIGAS…TLKKLQEAFD (170 aa)) form the Guanylate kinase-like domain.

Belongs to the MAGUK family. Heterodimer with PALS1. Interacts with DLG5 and NF2. Interacts (via guanylate kinase-like domain) with WHRN (via third PDZ domain). Post-translationally, palmitoylated.

The protein localises to the cell membrane. It localises to the cell projection. The protein resides in the stereocilium. Functionally, essential regulator of neutrophil polarity. Regulates neutrophil polarization by regulating AKT1 phosphorylation through a mechanism that is independent of PIK3CG activity. This Pongo abelii (Sumatran orangutan) protein is 55 kDa erythrocyte membrane protein (MPP1).